We begin with the raw amino-acid sequence, 40 residues long: Photosystem II reaction center protein J (40 aa).

Residues 8 to 28 (IPLWIIGTVTGIIVIGLIGIF) form a helical membrane-spanning segment.

This sequence belongs to the PsbJ family. In terms of assembly, PSII is composed of 1 copy each of membrane proteins PsbA, PsbB, PsbC, PsbD, PsbE, PsbF, PsbH, PsbI, PsbJ, PsbK, PsbL, PsbM, PsbT, PsbX, PsbY, PsbZ, Psb30/Ycf12, at least 3 peripheral proteins of the oxygen-evolving complex and a large number of cofactors. It forms dimeric complexes.

The protein localises to the plastid. It localises to the chloroplast thylakoid membrane. Functionally, one of the components of the core complex of photosystem II (PSII). PSII is a light-driven water:plastoquinone oxidoreductase that uses light energy to abstract electrons from H(2)O, generating O(2) and a proton gradient subsequently used for ATP formation. It consists of a core antenna complex that captures photons, and an electron transfer chain that converts photonic excitation into a charge separation. The protein is Photosystem II reaction center protein J of Morus indica (Mulberry).